Here is a 385-residue protein sequence, read N- to C-terminus: Lipoyl synthase, mitochondrial (385 aa).

Residues Cys107, Cys112, Cys118, Cys137, Cys141, Cys144, and Ser352 each coordinate [4Fe-4S] cluster. The Radical SAM core domain occupies Lys122–Leu341.

It belongs to the radical SAM superfamily. Lipoyl synthase family. [4Fe-4S] cluster is required as a cofactor.

It localises to the mitochondrion. The catalysed reaction is [[Fe-S] cluster scaffold protein carrying a second [4Fe-4S](2+) cluster] + N(6)-octanoyl-L-lysyl-[protein] + 2 oxidized [2Fe-2S]-[ferredoxin] + 2 S-adenosyl-L-methionine + 4 H(+) = [[Fe-S] cluster scaffold protein] + N(6)-[(R)-dihydrolipoyl]-L-lysyl-[protein] + 4 Fe(3+) + 2 hydrogen sulfide + 2 5'-deoxyadenosine + 2 L-methionine + 2 reduced [2Fe-2S]-[ferredoxin]. It participates in protein modification; protein lipoylation via endogenous pathway; protein N(6)-(lipoyl)lysine from octanoyl-[acyl-carrier-protein]: step 2/2. In terms of biological role, catalyzes the radical-mediated insertion of two sulfur atoms into the C-6 and C-8 positions of the octanoyl moiety bound to the lipoyl domains of lipoate-dependent enzymes, thereby converting the octanoylated domains into lipoylated derivatives. This chain is Lipoyl synthase, mitochondrial, found in Meyerozyma guilliermondii (strain ATCC 6260 / CBS 566 / DSM 6381 / JCM 1539 / NBRC 10279 / NRRL Y-324) (Yeast).